Here is a 278-residue protein sequence, read N- to C-terminus: Elongation factor Ts (278 aa).

The segment at 80-83 is involved in Mg(2+) ion dislocation from EF-Tu; that stretch reads TDFV.

This sequence belongs to the EF-Ts family.

It localises to the cytoplasm. Functionally, associates with the EF-Tu.GDP complex and induces the exchange of GDP to GTP. It remains bound to the aminoacyl-tRNA.EF-Tu.GTP complex up to the GTP hydrolysis stage on the ribosome. This Pseudarthrobacter chlorophenolicus (strain ATCC 700700 / DSM 12829 / CIP 107037 / JCM 12360 / KCTC 9906 / NCIMB 13794 / A6) (Arthrobacter chlorophenolicus) protein is Elongation factor Ts.